The chain runs to 490 residues: Secretory immunoglobulin A-binding protein EsiB (490 aa).

An N-terminal signal peptide occupies residues 1–23 (MKKSLLAVMLTGLFALVSLPALG). Sel1-like repeat units lie at residues 39–74 (AKAQ…EQGY), 77–109 (AEYV…ALKG), 111–145 (PQAQ…AEQG), 153–182 (MGDA…EQGN), 185–218 (SCNQ…TSGD), 222–254 (QLHL…EQGN), 256–290 (IAQF…EQGN), 291–327 (SDGQ…EQGD), 328–361 (ATAQ…AAKG), 364–397 (AAQF…AEQG), and 399–430 (SAAQ…DTAS). Residues His-122, Glu-159, and Asp-161 each contribute to the Mg(2+) site.

As to quaternary structure, interacts with human secreted IgA (SIgA) at least via resides 244-260. It depends on Mg(2+) as a cofactor.

It is found in the cell surface. Its function is as follows. Upon host (human neutrophil) infection interferes with productive FCAR signaling, inhibiting secreted IgA (SIgA) effector functions and probably avoiding neutrophil activation. Inhibits the SIgA-mediated oxidative burst by neutrophils, decreases generation of ROS (reactive oxygen species) by neutrophils and reduces chemotaxis by neutrophils, all of which are SIgA effector functions used to stimulate the immune response. Does not block SIgA-binding to its receptor (FCAR) on neutrophils, but it decreases SIgA-stimulated phosphorylation of cytoplasmic proteins, including phospholipase C-gamma and MAP kinases, all actions that may be advantageous to the pathogen. This Escherichia coli O6:H1 (strain CFT073 / ATCC 700928 / UPEC) protein is Secretory immunoglobulin A-binding protein EsiB.